Consider the following 286-residue polypeptide: Aldo-keto reductase MAP_4149 (286 aa).

The active-site Proton donor is Tyr61. The NADPH site is built by Leu201, Val203, Val239, Arg241, Ser242, Arg247, and Asn251.

The protein belongs to the aldo/keto reductase family.

In Mycolicibacterium paratuberculosis (strain ATCC BAA-968 / K-10) (Mycobacterium paratuberculosis), this protein is Aldo-keto reductase MAP_4149.